The following is a 660-amino-acid chain: Acetyl-coenzyme A synthetase (660 aa).

CoA contacts are provided by residues 197–200 (RGGK) and T317. Residues 397-399 (GEP), 421-426 (DTFWQT), D512, and R528 contribute to the ATP site. S536 serves as a coordination point for CoA. R539 lines the ATP pocket. Mg(2+) contacts are provided by V550 and V555. Residue K625 is modified to N6-acetyllysine.

The protein belongs to the ATP-dependent AMP-binding enzyme family. Mg(2+) serves as cofactor. Post-translationally, acetylated. Deacetylation by the SIR2-homolog deacetylase activates the enzyme.

The enzyme catalyses acetate + ATP + CoA = acetyl-CoA + AMP + diphosphate. It participates in ketone degradation; acetoin degradation. Its function is as follows. Catalyzes the conversion of acetate into acetyl-CoA (AcCoA), an essential intermediate at the junction of anabolic and catabolic pathways. AcsA undergoes a two-step reaction. In the first half reaction, AcsA combines acetate with ATP to form acetyl-adenylate (AcAMP) intermediate. In the second half reaction, it can then transfer the acetyl group from AcAMP to the sulfhydryl group of CoA, forming the product AcCoA. Although acetate is the preferred substrate of AcsA, propionate is also used, but at a diminished rate compared with that of acetate. Fatty acids with more than three carbon atoms are usually not accepted as substrates by AcsA. The polypeptide is Acetyl-coenzyme A synthetase (Cupriavidus necator (strain ATCC 17699 / DSM 428 / KCTC 22496 / NCIMB 10442 / H16 / Stanier 337) (Ralstonia eutropha)).